The sequence spans 141 residues: Protein X (141 aa).

Over residues 24–48 the composition is skewed to low complexity; sequence QSSGPSFPRPAAGSAASSASSPSPS. The tract at residues 24–52 is disordered; sequence QSSGPSFPRPAAGSAASSASSPSPSDESD. Residues 68-113 are mitochondrial targeting sequence; sequence PCCLVFTCAELRTMDSTVNFVSWHANRQLGMPSKDLWTPYIKDQLL.

This sequence belongs to the orthohepadnavirus protein X family. As to quaternary structure, may form homodimer. May interact with host CEBPA, CFLAR, CREB1, DDB1, E4F1, HBXIP, HSPD1/HSP60, NFKBIA, POLR2E and SMAD4. Interacts with host SMC5-SMC6 complex and induces its degradation. Interacts with host TRPC4AP; leading to prevent ubiquitination of TRPC4AP. Interacts with host PLSCR1; this interaction promotes ubiquitination and degradation of HBx and impairs HBx-mediated cell proliferation. Post-translationally, a fraction may be phosphorylated in insect cells and HepG2 cells, a human hepatoblastoma cell line. Phosphorylated in vitro by host protein kinase C or mitogen-activated protein kinase. N-acetylated in insect cells.

Its subcellular location is the host cytoplasm. It is found in the host nucleus. The protein resides in the host mitochondrion. Its function is as follows. Multifunctional protein that plays a role in silencing host antiviral defenses and promoting viral transcription. Does not seem to be essential for HBV infection. May be directly involved in development of cirrhosis and liver cancer (hepatocellular carcinoma). Most of cytosolic activities involve modulation of cytosolic calcium. The effect on apoptosis is controversial depending on the cell types in which the studies have been conducted. May induce apoptosis by localizing in mitochondria and causing loss of mitochondrial membrane potential. May also modulate apoptosis by binding host CFLAR, a key regulator of the death-inducing signaling complex (DISC). Promotes viral transcription by using the host E3 ubiquitin ligase DDB1 to target the SMC5-SMC6 complex to proteasomal degradation. This host complex would otherwise bind to viral episomal DNA, and prevents its transcription. Moderately stimulates transcription of many different viral and cellular transcription elements. Promoters and enhancers stimulated by HBx contain DNA binding sites for NF-kappa-B, AP-1, AP-2, c-EBP, ATF/CREB, or the calcium-activated factor NF-AT. The sequence is that of Protein X from Woodchuck hepatitis B virus (isolate 7) (WHV).